Consider the following 286-residue polypeptide: Versiconal hemiacetal acetate esterase stcI (286 aa).

The Involved in the stabilization of the negatively charged intermediate by the formation of the oxyanion hole motif lies at 54-56 (HAG). Active-site residues include serine 123, aspartate 226, and histidine 256.

Belongs to the 'GDXG' lipolytic enzyme family.

The catalysed reaction is (2S,3S)-versiconal hemiacetal acetate + H2O = (2S-3S)-versiconal hemiacetal + acetate + H(+). It carries out the reaction (3S)-versiconol acetate + H2O = (S)-versiconol + acetate + H(+). Its pathway is mycotoxin biosynthesis; sterigmatocystin biosynthesis. Functionally, esterase; part of the gene cluster that mediates the biosynthesis of sterigmatocystin (ST), a polyketide-derived furanocoumarin which is part of the most toxic and carcinogenic compounds among the known mycotoxins. The first step in the biosynthesis of sterigmatocystin is the production of hexanoate by the fatty acid synthase (FAS) units stcJ and stcK. The polyketide backbone is assembled by the non-reducing polyketide synthase stcA by condensation of the starter hexanoyl-CoA and 7 malonyl-CoA extender units followed by cyclization and release of norsolorinic acid. Norsolorinic acid is the first stable intermediate in the biosynthesis of sterigmatocystin and is converted into averantin (AVN) by the ketoreductase stcE which reduces the hexanoate ketone to an alcohol. Averantin is then oxidized into 5'-hydroxyaverantin (HAVN) by the cytochrome P450 monooxygenase stcF. 5'-hydroxyaverantin is further converted to 5'-oxyaverantin (OAVN) by the 5'-hydroxyaverantin dehydrogenase stcG. The next step is the conversion of OAVN into averufin (AVF) which is catalyzed by a yet to be identified enzyme. The cytochrome P450 monooxygenase stcB and the flavin-binding monooxygenase stcW are both required for the conversion of averufin to 1-hydroxyversicolorone. The esterase stcI probably catalyzes the formation of versiconal hemiacetal acetate from 1-hydroxyversicolorone. The oxydoreductase stcN then probably catalyzes the biosynthetic step from versiconal to versicolorin B (VERB). The next step is performed by the versicolorin B desaturase stcL to produce versicolorin A (VERA). The ketoreductase stcU and the cytochrome P450 monooxygenase stcS are involved in the conversion of versicolorin A to demethylsterigmatocystin. The Baeyer-Villiger oxidas stcQ and the reductase stcR might be involved in the biosynthetic step from versicolorin A to demethylsterigmatocystin. The final step in the biosynthesis of sterigmatocystin is the methylation of demethylsterigmatocystin catalyzed by the methyltransferase stcP. The chain is Versiconal hemiacetal acetate esterase stcI from Emericella nidulans (strain FGSC A4 / ATCC 38163 / CBS 112.46 / NRRL 194 / M139) (Aspergillus nidulans).